We begin with the raw amino-acid sequence, 480 residues long: UDP-glucose 6-dehydrogenase 3 (480 aa).

NAD(+) is bound by residues 8 to 13, D33, R38, 86 to 90, 127 to 128, and E161; these read GAGYVG, VNTPT, and ST. Residues 157–161, 216–223, and 256–269 contribute to the substrate site; these read EFLAE, KLAANAFL, and RIGPKFLNSSVGFG. Catalysis depends on C272, which acts as the Nucleophile. An NAD(+)-binding site is contributed by 272-275; the sequence is CFQK. Position 334-335 (334-335) interacts with substrate; that stretch reads FK. R342 serves as a coordination point for NAD(+). Position 447 (R447) interacts with substrate.

Belongs to the UDP-glucose/GDP-mannose dehydrogenase family.

It carries out the reaction UDP-alpha-D-glucose + 2 NAD(+) + H2O = UDP-alpha-D-glucuronate + 2 NADH + 3 H(+). Its pathway is nucleotide-sugar biosynthesis; UDP-alpha-D-glucuronate biosynthesis; UDP-alpha-D-glucuronate from UDP-alpha-D-glucose: step 1/1. With respect to regulation, inhibited by UDP-xylose. In terms of biological role, involved in the biosynthesis of UDP-glucuronic acid (UDP-GlcA), providing nucleotide sugars for cell-wall polymers. Required for the formation of cell wall ingrowths on the outer cell walls of nematode-induced syncytia. This chain is UDP-glucose 6-dehydrogenase 3 (UGD3), found in Arabidopsis thaliana (Mouse-ear cress).